The chain runs to 355 residues: Probable aldo-keto reductase 3 (355 aa).

The Proton donor role is filled by Y70. Position 138 (H138) interacts with substrate. 217 to 227 (SPLGRGFFSSG) serves as a coordination point for NADP(+).

This sequence belongs to the aldo/keto reductase family.

The sequence is that of Probable aldo-keto reductase 3 from Oryza sativa subsp. japonica (Rice).